Reading from the N-terminus, the 178-residue chain is Large ribosomal subunit protein uL6 (178 aa).

It belongs to the universal ribosomal protein uL6 family. As to quaternary structure, part of the 50S ribosomal subunit.

Its function is as follows. This protein binds to the 23S rRNA, and is important in its secondary structure. It is located near the subunit interface in the base of the L7/L12 stalk, and near the tRNA binding site of the peptidyltransferase center. The polypeptide is Large ribosomal subunit protein uL6 (Desulfatibacillum aliphaticivorans).